Here is a 123-residue protein sequence, read N- to C-terminus: Small ribosomal subunit protein cS23 (123 aa).

This sequence belongs to the chloroplast-specific ribosomal protein cS23 family. As to quaternary structure, part of the 30S ribosomal subunit.

Its subcellular location is the plastid. It is found in the chloroplast. Its function is as follows. Probably a ribosomal protein or a ribosome-associated protein. This is Small ribosomal subunit protein cS23 (ycf65) from Mesostigma viride (Green alga).